Consider the following 804-residue polypeptide: Phenylalanine--tRNA ligase beta subunit (804 aa).

The tRNA-binding domain occupies 38–148; that stretch reads RAAFRAFTIA…ENAPVGTSFA (111 aa). Residues 401 to 476 enclose the B5 domain; that stretch reads HTARVIDFPV…RIHGINRIDP (76 aa). Residues Asp454, Asp460, Glu463, and Glu464 each coordinate Mg(2+). The FDX-ACB domain maps to 710–803; it reads SLFQSLKRDY…VAKQTGGVLR (94 aa).

The protein belongs to the phenylalanyl-tRNA synthetase beta subunit family. Type 1 subfamily. As to quaternary structure, tetramer of two alpha and two beta subunits. Mg(2+) is required as a cofactor.

The protein resides in the cytoplasm. It carries out the reaction tRNA(Phe) + L-phenylalanine + ATP = L-phenylalanyl-tRNA(Phe) + AMP + diphosphate + H(+). The sequence is that of Phenylalanine--tRNA ligase beta subunit from Brucella suis biovar 1 (strain 1330).